The following is a 193-amino-acid chain: Ion-translocating oxidoreductase complex subunit A (193 aa).

A run of 6 helical transmembrane segments spans residues 5–25 (ILLIISTALINNFVLVKFLGL), 39–59 (IGMGMATTFVLTVASLSAYLV), 65–85 (IPLEAEFLRTLVFILVIAVIV), 102–122 (LLGIYLPLITTNCAVLGVALL), 134–154 (VLYGFGAAAGFSLVLVLFSAL), and 171–191 (SIALITAGLMSLAFMGFTGLV).

This sequence belongs to the NqrDE/RnfAE family. In terms of assembly, the complex is composed of six subunits: RnfA, RnfB, RnfC, RnfD, RnfE and RnfG.

The protein localises to the cell inner membrane. Its function is as follows. Part of a membrane-bound complex that couples electron transfer with translocation of ions across the membrane. This chain is Ion-translocating oxidoreductase complex subunit A, found in Glaesserella parasuis serovar 5 (strain SH0165) (Haemophilus parasuis).